The primary structure comprises 720 residues: Serine/threonine-protein kinase KIN82 (720 aa).

2 stretches are compositionally biased toward polar residues: residues 1-13 (MTQQEYRSPSQRL) and 99-116 (FNHNRSKSSGTTDASTSE). 2 disordered regions span residues 1-20 (MTQQEYRSPSQRLSKGRSMS) and 99-128 (FNHNRSKSSGTTDASTSEKGTHKREPRSTI). Ser-203 is modified (phosphoserine). Over residues 230–241 (SPLANLSLSNSP) the composition is skewed to low complexity. The disordered stretch occupies residues 230-257 (SPLANLSLSNSPIDSPRKNSETRKDQIP). Positions 244–255 (SPRKNSETRKDQ) are enriched in basic and acidic residues. Residues 324 to 602 (FEKIRLLGQG…AADIKRHPFF (279 aa)) enclose the Protein kinase domain. Residues 330–338 (LGQGDVGKV) and Lys-353 each bind ATP. Asp-449 acts as the Proton acceptor in catalysis.

This sequence belongs to the protein kinase superfamily. Ser/Thr protein kinase family. KIN82 subfamily.

The enzyme catalyses L-seryl-[protein] + ATP = O-phospho-L-seryl-[protein] + ADP + H(+). The catalysed reaction is L-threonyl-[protein] + ATP = O-phospho-L-threonyl-[protein] + ADP + H(+). Its function is as follows. Flippase activator that phosphorylates DFN1 and DFN2 and which is involved in the generation of phospholipid asymmetry in membranes by the inward translocation of phospholipids. The chain is Serine/threonine-protein kinase KIN82 (KIN82) from Saccharomyces cerevisiae (strain ATCC 204508 / S288c) (Baker's yeast).